A 219-amino-acid chain; its full sequence is tRNA (guanine-N(7)-)-methyltransferase (219 aa).

Glutamate 44, aspartate 69, glutamate 102, and asparagine 125 together coordinate S-adenosyl-L-methionine. Substrate is bound by residues lysine 129 and aspartate 161.

It belongs to the class I-like SAM-binding methyltransferase superfamily. TrmB family.

The enzyme catalyses guanosine(46) in tRNA + S-adenosyl-L-methionine = N(7)-methylguanosine(46) in tRNA + S-adenosyl-L-homocysteine. Its pathway is tRNA modification; N(7)-methylguanine-tRNA biosynthesis. Its function is as follows. Catalyzes the formation of N(7)-methylguanine at position 46 (m7G46) in tRNA. The polypeptide is tRNA (guanine-N(7)-)-methyltransferase (Clostridium perfringens (strain SM101 / Type A)).